Here is a 108-residue protein sequence, read N- to C-terminus: Replication restart protein PriB (108 aa).

One can recognise an SSB domain in the interval 8 to 108; the sequence is VDNRFSLIGK…LHAEQIEFIE (101 aa).

It belongs to the PriB family. In terms of assembly, homodimer. Interacts with PriA and DnaT. Component of the replication restart primosome. Primosome assembly occurs via a 'hand-off' mechanism. PriA binds to replication forks, subsequently PriB then DnaT bind; DnaT then displaces ssDNA to generate the helicase loading substrate.

Functionally, involved in the restart of stalled replication forks, which reloads the replicative helicase on sites other than the origin of replication; the PriA-PriB pathway is the major replication restart pathway. During primosome assembly it facilitates complex formation between PriA and DnaT on DNA; stabilizes PriA on DNA. Stimulates the DNA unwinding activity of PriA helicase. The sequence is that of Replication restart protein PriB from Histophilus somni (strain 2336) (Haemophilus somnus).